Here is a 156-residue protein sequence, read N- to C-terminus: Ribonuclease pancreatic (156 aa).

Positions 1–28 (MALEKSLVLLPLFVLMLLVLGWVQPSLG) are cleaved as a signal peptide. Residues Lys35 and Arg38 each coordinate substrate. His40 acts as the Proton acceptor in catalysis. Residues Asn50 and Asn62 are each glycosylated (N-linked (GlcNAc...) asparagine). 4 disulfides stabilise this stretch: Cys54/Cys112, Cys68/Cys123, Cys86/Cys138, and Cys93/Cys100. Substrate-binding positions include 69–73 (KPVNT) and Lys94. Asn104 carries an N-linked (GlcNAc...) asparagine glycan. Arg113 provides a ligand contact to substrate. The N-linked (GlcNAc...) asparagine glycan is linked to Asn116. His147 functions as the Proton donor in the catalytic mechanism.

It belongs to the pancreatic ribonuclease family. As to quaternary structure, monomer. Interacts with and forms tight 1:1 complexes with RNH1. Dimerization of two such complexes may occur. Interaction with RNH1 inhibits this protein.

It localises to the secreted. It catalyses the reaction an [RNA] containing cytidine + H2O = an [RNA]-3'-cytidine-3'-phosphate + a 5'-hydroxy-ribonucleotide-3'-[RNA].. It carries out the reaction an [RNA] containing uridine + H2O = an [RNA]-3'-uridine-3'-phosphate + a 5'-hydroxy-ribonucleotide-3'-[RNA].. In terms of biological role, endonuclease that catalyzes the cleavage of RNA on the 3' side of pyrimidine nucleotides. Acts on single-stranded and double-stranded RNA. The sequence is that of Ribonuclease pancreatic (RNASE1) from Nomascus leucogenys (Northern white-cheeked gibbon).